The following is a 197-amino-acid chain: MFDIGFGELLLVMVLGLIVLGPERLPVAVRTVASWIRTLRSLASTVQNELSQELKLQEFQESLKKVEKASLQNLSPELKASMDELKDAAEAMKRGYTETPSPQKSDDPKKSGDHSATVEPQSNIPLNDPEAAYDGVIEAETAVRPADSQQKPENAAVAENHNDGRHATSDEAVGNNNVKPEQSQPSAASARQPSDSR.

A helical transmembrane segment spans residues 1–21 (MFDIGFGELLLVMVLGLIVLG). A disordered region spans residues 93–197 (KRGYTETPSP…ASARQPSDSR (105 aa)). Composition is skewed to basic and acidic residues over residues 104–113 (KSDDPKKSGD) and 160–169 (NHNDGRHATS). The span at 180–197 (PEQSQPSAASARQPSDSR) shows a compositional bias: low complexity.

The protein belongs to the TatB family. The Tat system comprises two distinct complexes: a TatABC complex, containing multiple copies of TatA, TatB and TatC subunits, and a separate TatA complex, containing only TatA subunits. Substrates initially bind to the TatABC complex, which probably triggers association of the separate TatA complex to form the active translocon.

It is found in the cell inner membrane. Its function is as follows. Part of the twin-arginine translocation (Tat) system that transports large folded proteins containing a characteristic twin-arginine motif in their signal peptide across membranes. Together with TatC, TatB is part of a receptor directly interacting with Tat signal peptides. TatB may form an oligomeric binding site that transiently accommodates folded Tat precursor proteins before their translocation. This is Sec-independent protein translocase protein TatB from Pectobacterium atrosepticum (strain SCRI 1043 / ATCC BAA-672) (Erwinia carotovora subsp. atroseptica).